We begin with the raw amino-acid sequence, 71 residues long: Cell division protein FtsB (71 aa).

The Cytoplasmic segment spans residues 1-3 (MKI). A helical transmembrane segment spans residues 4 to 21 (LKIFLLSLLFWLQYSLWF). Residues 22–71 (GKNGVLDFIKIYRRVTIEKKNNEYLDMRNNQIILEIENFNNHINKDKKKT) lie on the Extracellular side of the membrane.

It belongs to the FtsB family.

The protein localises to the cell membrane. In terms of biological role, essential cell division protein. May link together the upstream cell division proteins, which are predominantly cytoplasmic, with the downstream cell division proteins, which are predominantly extracellular. The polypeptide is Cell division protein FtsB (Buchnera aphidicola subsp. Acyrthosiphon pisum (strain APS) (Acyrthosiphon pisum symbiotic bacterium)).